We begin with the raw amino-acid sequence, 1221 residues long: WEB family protein At4g27595, chloroplastic (1221 aa).

The disordered stretch occupies residues Met-1–Pro-68. Residues Met-1–Met-82 constitute a chloroplast transit peptide. Polar residues predominate over residues Ser-32 to Pro-58. Coiled-coil stretches lie at residues Thr-95–His-149, Thr-202–Lys-543, and Ala-587–Ile-1084. The span at Glu-1073–Glu-1083 shows a compositional bias: basic and acidic residues. Residues Glu-1073 to Lys-1221 form a disordered region. Polar residues predominate over residues Ile-1084–Gln-1097. 2 stretches are compositionally biased toward basic and acidic residues: residues Ala-1106 to Thr-1116 and Lys-1129 to Asp-1160. Over residues Asn-1175–Glu-1187 the composition is skewed to polar residues.

It belongs to the WEB family.

It localises to the plastid. It is found in the chloroplast. In Arabidopsis thaliana (Mouse-ear cress), this protein is WEB family protein At4g27595, chloroplastic.